A 144-amino-acid chain; its full sequence is Large ribosomal subunit protein uL16 (144 aa).

It belongs to the universal ribosomal protein uL16 family. As to quaternary structure, part of the 50S ribosomal subunit.

Functionally, binds 23S rRNA and is also seen to make contacts with the A and possibly P site tRNAs. This chain is Large ribosomal subunit protein uL16, found in Acidobacterium capsulatum (strain ATCC 51196 / DSM 11244 / BCRC 80197 / JCM 7670 / NBRC 15755 / NCIMB 13165 / 161).